A 952-amino-acid polypeptide reads, in one-letter code: Inactive atromentin synthetase invA6 (952 aa).

Residues 58–462 (DSSVQTRSFS…NGRIKDTVIV (405 aa)) form an adenylation (A) domain region. A Carrier domain is found at 594 to 672 (APSTETEKTL…SLAKYVDSLV (79 aa)). The thiolation and peptide carrier (T) domain stretch occupies residues 599 to 669 (TEKTLGRLYA…VISSLAKYVD (71 aa)). Position 631 is an O-(pantetheine 4'-phosphoryl)serine (S631). Residues 695–939 (PIFMVHPGIG…LMDFDHVSGF (245 aa)) form a thioesterase (TE) domain region.

Belongs to the ATP-dependent AMP-binding enzyme family.

In terms of biological role, inactive atromentin synthetase homolog. Does not accept 4-hydroxyphenylpyruvate (4-HPP) as substrate. Both the adenylation (A) and the thioesterase (TE) domain of the invA6 enzyme are inactive. The polypeptide is Inactive atromentin synthetase invA6 (invA6) (Paxillus involutus (Naked brimcap)).